Consider the following 89-residue polypeptide: Small ribosomal subunit protein uS15 (89 aa).

This sequence belongs to the universal ribosomal protein uS15 family. As to quaternary structure, part of the 30S ribosomal subunit. Forms a bridge to the 50S subunit in the 70S ribosome, contacting the 23S rRNA.

One of the primary rRNA binding proteins, it binds directly to 16S rRNA where it helps nucleate assembly of the platform of the 30S subunit by binding and bridging several RNA helices of the 16S rRNA. Functionally, forms an intersubunit bridge (bridge B4) with the 23S rRNA of the 50S subunit in the ribosome. This chain is Small ribosomal subunit protein uS15, found in Salinispora tropica (strain ATCC BAA-916 / DSM 44818 / JCM 13857 / NBRC 105044 / CNB-440).